A 687-amino-acid chain; its full sequence is DNA-directed RNA polymerase subunit beta' (687 aa).

C76, C78, C94, and C97 together coordinate Zn(2+). Positions 496, 498, and 500 each coordinate Mg(2+).

This sequence belongs to the RNA polymerase beta' chain family. RpoC1 subfamily. As to quaternary structure, in plastids the minimal PEP RNA polymerase catalytic core is composed of four subunits: alpha, beta, beta', and beta''. When a (nuclear-encoded) sigma factor is associated with the core the holoenzyme is formed, which can initiate transcription. Mg(2+) is required as a cofactor. The cofactor is Zn(2+).

The protein resides in the plastid. Its subcellular location is the chloroplast. The catalysed reaction is RNA(n) + a ribonucleoside 5'-triphosphate = RNA(n+1) + diphosphate. DNA-dependent RNA polymerase catalyzes the transcription of DNA into RNA using the four ribonucleoside triphosphates as substrates. The sequence is that of DNA-directed RNA polymerase subunit beta' from Ipomoea purpurea (Common morning glory).